The sequence spans 203 residues: Thymidylate kinase (203 aa).

10–17 provides a ligand contact to ATP; the sequence is GIDGSGKS.

This sequence belongs to the thymidylate kinase family.

It carries out the reaction dTMP + ATP = dTDP + ADP. In terms of biological role, phosphorylation of dTMP to form dTDP in both de novo and salvage pathways of dTTP synthesis. The sequence is that of Thymidylate kinase from Brachyspira hyodysenteriae (strain ATCC 49526 / WA1).